The primary structure comprises 352 residues: uncharacterized protein (352 aa).

An N-terminal signal peptide occupies residues 1–21; the sequence is MNVDSRVFRFFLVFLILVVVA.

Belongs to the bacterial solute-binding protein 1 family. WtpA subfamily.

This is an uncharacterized protein from Methanosarcina acetivorans (strain ATCC 35395 / DSM 2834 / JCM 12185 / C2A).